Consider the following 358-residue polypeptide: Ganglioside-induced differentiation-associated protein 1 (358 aa).

Positions 24 to 105 constitute a GST N-terminal domain; it reads VHLILYHWTH…YLEQTFLDER (82 aa). Glycyl lysine isopeptide (Lys-Gly) (interchain with G-Cter in ubiquitin) cross-links involve residues lysine 50, lysine 172, lysine 173, lysine 188, and lysine 190. One can recognise a GST C-terminal domain in the interval 153–309; sequence PAYATTRIRS…LISAVLPTAF (157 aa). Lysine 203 carries the N6-acetyllysine; alternate modification. Lysine 203 is covalently cross-linked (Glycyl lysine isopeptide (Lys-Gly) (interchain with G-Cter in ubiquitin); alternate). Glycyl lysine isopeptide (Lys-Gly) (interchain with G-Cter in ubiquitin) cross-links involve residues lysine 206, lysine 207, and lysine 214. A run of 2 helical transmembrane segments spans residues 292-312 and 320-340; these read VLGH…FRVA and LGST…FMLF. The tract at residues 320-358 is required for mitochondrial localization; sequence LGSTLVVGLLVGMGYFAFMLFRRRLGSMILALRPRPNYF.

This sequence belongs to the GST superfamily. Homodimer. Post-translationally, ubiquitinated by PRKN during mitophagy, leading to its degradation and enhancement of mitophagy. Deubiquitinated by USP30. As to expression, expressed in brain, spinal cord, muscles and intestinal villi. In the central nervous system expressed most prominently in the cortex, cerebellum, thalamus, olfactory bulb, and spinal cord. Expressed also in sciatic nerves and in dorsal root ganglia.

The protein resides in the mitochondrion outer membrane. It localises to the cytoplasm. Regulates the mitochondrial network by promoting mitochondrial fission. This chain is Ganglioside-induced differentiation-associated protein 1 (Gdap1), found in Mus musculus (Mouse).